We begin with the raw amino-acid sequence, 404 residues long: Cysteine desulfurase IscS (404 aa).

Residues 75-76 (AT), asparagine 155, glutamine 183, and 203-205 (SAH) contribute to the pyridoxal 5'-phosphate site. Lysine 206 is modified (N6-(pyridoxal phosphate)lysine). Position 243 (threonine 243) interacts with pyridoxal 5'-phosphate. The active-site Cysteine persulfide intermediate is the cysteine 328. Cysteine 328 is a binding site for [2Fe-2S] cluster.

The protein belongs to the class-V pyridoxal-phosphate-dependent aminotransferase family. NifS/IscS subfamily. Homodimer. Forms a heterotetramer with IscU, interacts with other sulfur acceptors. Pyridoxal 5'-phosphate serves as cofactor.

Its subcellular location is the cytoplasm. It carries out the reaction (sulfur carrier)-H + L-cysteine = (sulfur carrier)-SH + L-alanine. The protein operates within cofactor biosynthesis; iron-sulfur cluster biosynthesis. Master enzyme that delivers sulfur to a number of partners involved in Fe-S cluster assembly, tRNA modification or cofactor biosynthesis. Catalyzes the removal of elemental sulfur atoms from cysteine to produce alanine. Functions as a sulfur delivery protein for Fe-S cluster synthesis onto IscU, an Fe-S scaffold assembly protein, as well as other S acceptor proteins. This chain is Cysteine desulfurase IscS, found in Buchnera aphidicola subsp. Schizaphis graminum (strain Sg).